The primary structure comprises 457 residues: tRNA-2-methylthio-N(6)-dimethylallyladenosine synthase (457 aa).

Residues 3–120 (KKVYVKTFGC…LPQMIDARRE (118 aa)) enclose the MTTase N-terminal domain. [4Fe-4S] cluster is bound by residues C12, C49, C83, C157, C161, and C164. In terms of domain architecture, Radical SAM core spans 143-377 (RVEGPSAFVS…QATIEENVAR (235 aa)). Residues 380–447 (QSMLGKVERI…PHSLRGELVL (68 aa)) form the TRAM domain.

It belongs to the methylthiotransferase family. MiaB subfamily. In terms of assembly, monomer. The cofactor is [4Fe-4S] cluster.

Its subcellular location is the cytoplasm. It carries out the reaction N(6)-dimethylallyladenosine(37) in tRNA + (sulfur carrier)-SH + AH2 + 2 S-adenosyl-L-methionine = 2-methylsulfanyl-N(6)-dimethylallyladenosine(37) in tRNA + (sulfur carrier)-H + 5'-deoxyadenosine + L-methionine + A + S-adenosyl-L-homocysteine + 2 H(+). In terms of biological role, catalyzes the methylthiolation of N6-(dimethylallyl)adenosine (i(6)A), leading to the formation of 2-methylthio-N6-(dimethylallyl)adenosine (ms(2)i(6)A) at position 37 in tRNAs that read codons beginning with uridine. The protein is tRNA-2-methylthio-N(6)-dimethylallyladenosine synthase of Burkholderia mallei (strain NCTC 10247).